The chain runs to 132 residues: Small ribosomal subunit protein uS15 (132 aa).

The protein belongs to the universal ribosomal protein uS15 family. As to quaternary structure, part of the 30S ribosomal subunit.

The polypeptide is Small ribosomal subunit protein uS15 (Methanobrevibacter smithii (strain ATCC 35061 / DSM 861 / OCM 144 / PS)).